Consider the following 391-residue polypeptide: Casein kinase II subunit alpha (391 aa).

Positions 36–41 (QDDYQL) are interaction with beta subunit. One can recognise a Protein kinase domain in the interval 39 to 324 (YQLVRKLGRG…AREAMEHPYF (286 aa)). ATP is bound by residues 45 to 53 (LGRGKYSEV) and lysine 68. Aspartate 156 functions as the Proton acceptor in the catalytic mechanism. The span at 335–346 (GSSNMPGGSTPV) shows a compositional bias: polar residues. Residues 335 to 363 (GSSNMPGGSTPVSSASMMSGISSVPTPSP) are disordered. The segment covering 347-357 (SSASMMSGISS) has biased composition (low complexity).

The protein belongs to the protein kinase superfamily. Ser/Thr protein kinase family. CK2 subfamily. As to quaternary structure, tetramer composed of an alpha chain, an alpha' and two beta chains. Interacts with RNPS1.

It localises to the nucleus. It carries out the reaction L-seryl-[protein] + ATP = O-phospho-L-seryl-[protein] + ADP + H(+). The catalysed reaction is L-threonyl-[protein] + ATP = O-phospho-L-threonyl-[protein] + ADP + H(+). In terms of biological role, catalytic subunit of a constitutively active serine/threonine-protein kinase complex that phosphorylates a large number of substrates containing acidic residues C-terminal to the phosphorylated serine or threonine. Regulates numerous cellular processes, such as cell cycle progression, apoptosis and transcription, as well as viral infection. May act as a regulatory node which integrates and coordinates numerous signals leading to an appropriate cellular response. During mitosis, functions as a component of the p53/TP53-dependent spindle assembly checkpoint (SAC) that maintains cyclin-B-CDK1 activity and G2 arrest in response to spindle damage. Can also negatively regulate apoptosis. Phosphorylates the caspases CASP9 and CASP2 and the apoptotic regulator NOL3. Phosphorylation protects CASP9 from cleavage and activation by CASP8, and inhibits the dimerization of CASP2 and activation of CASP8. Plays an important role in the circadian clock function by phosphorylating BMAL1. This is Casein kinase II subunit alpha (CSNK2A1) from Gallus gallus (Chicken).